Reading from the N-terminus, the 394-residue chain is MLSSFNEWFWQDRFWLPPNVTWTELEDRDGRVYPHPQDLLAALPLALVLLAMRLAFERFIGLPLSRWLGVRDQTRRQVKPNATLEKHFLTEGHRPKEPQLSLLAAQCGLTLQQTQRWFRRRRNQDRPQLTKKFCEASWRFLFYLSSFVGGLSVLYHESWLWAPVMCWDRYPNQTLKPSLYWWYLLELGFYLSLLIRLPFDVKRKDFKEQVIHHFVAVILMTFSYSANLLRIGSLVLLLHDSSDYLLEACKMVNYMQYQQVCDALFLIFSFVFFYTRLVLFPTQILYTTYYESISNRGPFFGYYFFNGLLMLLQLLHVFWSCLILRMLYSFMKKGQMEKDIRSDVEESDSSEEAAAAQEPLQLKNGAAGGPRPAPTDGPRSRVAGRLTNRHTTAT.

At 1–31 (MLSSFNEWFWQDRFWLPPNVTWTELEDRDGR) the chain is on the lumenal side. Asparagine 19 is a glycosylation site (N-linked (GlcNAc...) asparagine). The chain crosses the membrane as a helical span at residues 32-52 (VYPHPQDLLAALPLALVLLAM). The interval 67–128 (WLGVRDQTRR…RRRRNQDRPQ (62 aa)) is homeobox-like. The 202-residue stretch at 131-332 (KKFCEASWRF…ILRMLYSFMK (202 aa)) folds into the TLC domain. Transmembrane regions (helical) follow at residues 140 to 160 (FLFY…ESWL), 179 to 199 (LYWW…RLPF), 209 to 229 (QVIH…ANLL), and 260 to 280 (VCDA…LVLF). A Last loop motif motif is present at residues 291-301 (ESISNRGPFFG). A helical transmembrane segment spans residues 304–324 (FFNGLLMLLQLLHVFWSCLIL). Topologically, residues 325–394 (RMLYSFMKKG…RLTNRHTTAT (70 aa)) are cytoplasmic. A disordered region spans residues 341-394 (RSDVEESDSSEEAAAAQEPLQLKNGAAGGPRPAPTDGPRSRVAGRLTNRHTTAT). Residues serine 342, serine 349, and serine 350 each carry the phosphoserine modification.

Post-translationally, phosphorylated at the C-terminus by CK2. In terms of processing, N-glycosylated.

The protein resides in the endoplasmic reticulum membrane. It carries out the reaction sphinganine + octadecanoyl-CoA = N-(octadecanoyl)-sphinganine + CoA + H(+). The catalysed reaction is eicosanoyl-CoA + sphinganine = N-eicosanoylsphinganine + CoA + H(+). It catalyses the reaction docosanoyl-CoA + sphinganine = N-docosanoylsphinganine + CoA + H(+). The enzyme catalyses tetracosanoyl-CoA + sphinganine = N-tetracosanoylsphinganine + CoA + H(+). It carries out the reaction hexacosanoyl-CoA + sphinganine = N-hexacosanoylsphinganine + CoA + H(+). The catalysed reaction is a fatty acyl-CoA + sphing-4-enine = an N-acylsphing-4-enine + CoA + H(+). It catalyses the reaction sphing-4-enine + octadecanoyl-CoA = N-octadecanoylsphing-4-enine + CoA + H(+). The enzyme catalyses hexadecasphinganine + octadecanoyl-CoA = N-octadecanoylhexadecasphinganine + CoA + H(+). Its pathway is lipid metabolism; sphingolipid metabolism. Its function is as follows. Ceramide synthase that catalyzes formation of ceramide from sphinganine and acyl-CoA substrates, with high selectivity toward long and very-long chains (C18:0-C22:0) as acyl donor. This is Ceramide synthase 4 from Homo sapiens (Human).